A 969-amino-acid polypeptide reads, in one-letter code: RNA polymerase-associated protein RapA (969 aa).

The region spanning 162–339 (EVGQRVAPRV…FARLALLDAD (178 aa)) is the Helicase ATP-binding domain. 175 to 182 (DEVGLGKT) lines the ATP pocket. Residues 285–288 (DEAH) carry the DEAH box motif. Positions 492 to 663 (RIEWLITFLK…GFLKNPQAVG (172 aa)) constitute a Helicase C-terminal domain.

This sequence belongs to the SNF2/RAD54 helicase family. RapA subfamily. As to quaternary structure, interacts with the RNAP. Has a higher affinity for the core RNAP than for the holoenzyme. Its ATPase activity is stimulated by binding to RNAP.

Functionally, transcription regulator that activates transcription by stimulating RNA polymerase (RNAP) recycling in case of stress conditions such as supercoiled DNA or high salt concentrations. Probably acts by releasing the RNAP, when it is trapped or immobilized on tightly supercoiled DNA. Does not activate transcription on linear DNA. Probably not involved in DNA repair. In Actinobacillus pleuropneumoniae serotype 7 (strain AP76), this protein is RNA polymerase-associated protein RapA.